The primary structure comprises 282 residues: 4-hydroxy-3-methylbut-2-enyl diphosphate reductase (282 aa).

Cys-12 lines the [4Fe-4S] cluster pocket. (2E)-4-hydroxy-3-methylbut-2-enyl diphosphate is bound by residues His-40 and His-72. Dimethylallyl diphosphate contacts are provided by His-40 and His-72. Isopentenyl diphosphate-binding residues include His-40 and His-72. Cys-94 contributes to the [4Fe-4S] cluster binding site. His-122 is a binding site for (2E)-4-hydroxy-3-methylbut-2-enyl diphosphate. His-122 contacts dimethylallyl diphosphate. An isopentenyl diphosphate-binding site is contributed by His-122. Glu-124 (proton donor) is an active-site residue. Thr-160 lines the (2E)-4-hydroxy-3-methylbut-2-enyl diphosphate pocket. Residue Cys-188 participates in [4Fe-4S] cluster binding. (2E)-4-hydroxy-3-methylbut-2-enyl diphosphate-binding residues include Ser-216, Asn-218, and Ser-260. Positions 216, 218, and 260 each coordinate dimethylallyl diphosphate. Residues Ser-216, Asn-218, and Ser-260 each coordinate isopentenyl diphosphate.

It belongs to the IspH family. Requires [4Fe-4S] cluster as cofactor.

The catalysed reaction is isopentenyl diphosphate + 2 oxidized [2Fe-2S]-[ferredoxin] + H2O = (2E)-4-hydroxy-3-methylbut-2-enyl diphosphate + 2 reduced [2Fe-2S]-[ferredoxin] + 2 H(+). The enzyme catalyses dimethylallyl diphosphate + 2 oxidized [2Fe-2S]-[ferredoxin] + H2O = (2E)-4-hydroxy-3-methylbut-2-enyl diphosphate + 2 reduced [2Fe-2S]-[ferredoxin] + 2 H(+). The protein operates within isoprenoid biosynthesis; dimethylallyl diphosphate biosynthesis; dimethylallyl diphosphate from (2E)-4-hydroxy-3-methylbutenyl diphosphate: step 1/1. Its pathway is isoprenoid biosynthesis; isopentenyl diphosphate biosynthesis via DXP pathway; isopentenyl diphosphate from 1-deoxy-D-xylulose 5-phosphate: step 6/6. Functionally, catalyzes the conversion of 1-hydroxy-2-methyl-2-(E)-butenyl 4-diphosphate (HMBPP) into a mixture of isopentenyl diphosphate (IPP) and dimethylallyl diphosphate (DMAPP). Acts in the terminal step of the DOXP/MEP pathway for isoprenoid precursor biosynthesis. The sequence is that of 4-hydroxy-3-methylbut-2-enyl diphosphate reductase from Geobacter metallireducens (strain ATCC 53774 / DSM 7210 / GS-15).